The chain runs to 430 residues: GTPase Obg (430 aa).

In terms of domain architecture, Obg spans 1 to 158 (MFVDQVKISL…LEVTLELKLL (158 aa)). Residues 118 to 145 (RGGRGGRGNSRFATPRNPAPDFSENGEP) form a disordered region. In terms of domain architecture, OBG-type G spans 159–329 (ADVGLVGFPS…LLYQIADKLE (171 aa)). GTP is bound by residues 165–172 (GFPSVGKS), 190–194 (FTTIK), 212–215 (DLPG), 282–285 (NKMD), and 310–312 (STI). Mg(2+) contacts are provided by Ser-172 and Thr-192. In terms of domain architecture, OCT spans 352-430 (KHTPSADKFT…ILGGEFEFVE (79 aa)).

The protein belongs to the TRAFAC class OBG-HflX-like GTPase superfamily. OBG GTPase family. In terms of assembly, monomer. The cofactor is Mg(2+).

It localises to the cytoplasm. Its function is as follows. An essential GTPase which binds GTP, GDP and possibly (p)ppGpp with moderate affinity, with high nucleotide exchange rates and a fairly low GTP hydrolysis rate. Plays a role in control of the cell cycle, stress response, ribosome biogenesis and in those bacteria that undergo differentiation, in morphogenesis control. This Staphylococcus epidermidis (strain ATCC 35984 / DSM 28319 / BCRC 17069 / CCUG 31568 / BM 3577 / RP62A) protein is GTPase Obg.